The following is a 324-amino-acid chain: Quinolinate synthase 2 (324 aa).

Iminosuccinate-binding residues include His-48 and Ser-66. A [4Fe-4S] cluster-binding site is contributed by Cys-111. Residues 137–139 and Ser-154 contribute to the iminosuccinate site; that span reads YVN. Cys-196 provides a ligand contact to [4Fe-4S] cluster. Iminosuccinate contacts are provided by residues 222–224 and Thr-239; that span reads HPE. Residue Cys-282 coordinates [4Fe-4S] cluster.

This sequence belongs to the quinolinate synthase family. Type 2 subfamily. [4Fe-4S] cluster serves as cofactor.

It is found in the cytoplasm. The enzyme catalyses iminosuccinate + dihydroxyacetone phosphate = quinolinate + phosphate + 2 H2O + H(+). It participates in cofactor biosynthesis; NAD(+) biosynthesis; quinolinate from iminoaspartate: step 1/1. In terms of biological role, catalyzes the condensation of iminoaspartate with dihydroxyacetone phosphate to form quinolinate. This Mesorhizobium japonicum (strain LMG 29417 / CECT 9101 / MAFF 303099) (Mesorhizobium loti (strain MAFF 303099)) protein is Quinolinate synthase 2.